Here is a 253-residue protein sequence, read N- to C-terminus: (S)-2-haloacid dehalogenase (253 aa).

Residue Asp8 is the Nucleophile of the active site. Residues 9 to 10 (AY), Arg39, and 114 to 115 (SN) each bind an (S)-2-haloacid. The important for catalytic activity stretch occupies residues 171–176 (SSNGFD).

This sequence belongs to the HAD-like hydrolase superfamily. S-2-haloalkanoic acid dehalogenase family. As to quaternary structure, homodimer.

The enzyme catalyses an (S)-2-haloacid + H2O = a (2R)-2-hydroxycarboxylate + a halide anion + H(+). It carries out the reaction (S)-2-chloropropanoate + H2O = (R)-lactate + chloride + H(+). In terms of biological role, catalyzes the hydrolytic dehalogenation of small (S)-2-haloalkanoic acids to yield the corresponding (R)-2-hydroxyalkanoic acids. Acts on acids of short chain lengths, C(2) to C(4), with inversion of configuration at C-2. Active with 2-halogenated carboxylic acids and converts only the S-isomer (or L-isomer) of 2-chloropropionic acid with inversion of configuration to produce R-lactate (or D-isomer). This Xanthobacter autotrophicus protein is (S)-2-haloacid dehalogenase.